The sequence spans 1354 residues: RNA-directed RNA polymerase VP1 (1354 aa).

It catalyses the reaction RNA(n) + a ribonucleoside 5'-triphosphate = RNA(n+1) + diphosphate. Functionally, RNA-directed RNA polymerase that is involved in transcription and genome replication. Following infection, it catalyzes the synthesis of fully conservative plus strands. After core assembly, which consists in recruitment of one capped plus-strand for each genomic segments and polymerase complexes, the polymerase switches mode and catalyzes the synthesis of complementary minus-strands. This chain is RNA-directed RNA polymerase VP1, found in Cryphonectria parasitica mycoreovirus 1 (strain 9B21) (CpMYRV-1).